Consider the following 215-residue polypeptide: Nitrate/nitrite response regulator protein NarP (215 aa).

One can recognise a Response regulatory domain in the interval 8–124 (QVMIVDDHPL…VLLEAIRAGA (117 aa)). At Asp-59 the chain carries 4-aspartylphosphate. Residues 147 to 212 (EEDPFSVLTE…AATILFLQQR (66 aa)) enclose the HTH luxR-type domain. The H-T-H motif DNA-binding region spans 171 to 190 (NKQIASVLNISEQTVKVHIR).

Functionally, this protein activates the expression of the nitrate reductase (narGHJI) and formate dehydrogenase-N (fdnGHI) operons and represses the transcription of the fumarate reductase (frdABCD) operon in response to a nitrate/nitrite induction signal transmitted by either the NarX or NarQ proteins. This Escherichia coli (strain K12) protein is Nitrate/nitrite response regulator protein NarP (narP).